We begin with the raw amino-acid sequence, 368 residues long: Transmembrane protein 26 (368 aa).

3 helical membrane passes run 4–24 (LVFL…LVGV), 36–56 (YWLL…TLKF), and 65–85 (FSPA…LLEL). Residue asparagine 110 is glycosylated (N-linked (GlcNAc...) asparagine). 5 helical membrane passes run 150–170 (QTFL…GGIT), 177–197 (LLLM…ETLE), 208–228 (VYAI…DLAV), 257–277 (IGIS…ILMT), and 281–301 (VINQ…VLQL). The tract at residues 324–368 (GEHGCRAQTSESGPSQRDWQNESKEGLAIPLRGSPVTSDDSHHTP) is disordered. Polar residues predominate over residues 330–341 (AQTSESGPSQRD).

It localises to the membrane. This chain is Transmembrane protein 26 (TMEM26), found in Homo sapiens (Human).